The sequence spans 205 residues: Meiotic nuclear division protein 1 homolog (205 aa).

At S2 the chain carries N-acetylserine. Residues 83 to 173 (KRKLEALNSQ…EAANRWTDNI (91 aa)) are a coiled coil.

This sequence belongs to the MND1 family. Heterodimer with PSMC3IP/HOP2. MND1-PSMC3IP interacts with DMC1 and RAD51 and binds to ssDNA and dsDNA showing no preference for either form of DNA.

Its subcellular location is the nucleus. Functionally, required for proper homologous chromosome pairing and efficient cross-over and intragenic recombination during meiosis. Stimulates both DMC1- and RAD51-mediated homologous strand assimilation, which is required for the resolution of meiotic double-strand breaks. The protein is Meiotic nuclear division protein 1 homolog of Mus musculus (Mouse).